The following is a 347-amino-acid chain: GMP reductase (347 aa).

108–131 (ADFEKTKQILDLNPALNFVCIDVA) is an NADP(+) binding site. Residues G181 and G183 each coordinate K(+). Catalysis depends on C186, which acts as the Thioimidate intermediate. 216-239 (IVSDGGCTTPGDVAKAFGGGADFV) provides a ligand contact to NADP(+).

This sequence belongs to the IMPDH/GMPR family. GuaC type 1 subfamily. As to quaternary structure, homotetramer.

The catalysed reaction is IMP + NH4(+) + NADP(+) = GMP + NADPH + 2 H(+). In terms of biological role, catalyzes the irreversible NADPH-dependent deamination of GMP to IMP. It functions in the conversion of nucleobase, nucleoside and nucleotide derivatives of G to A nucleotides, and in maintaining the intracellular balance of A and G nucleotides. The polypeptide is GMP reductase (Escherichia coli (strain SMS-3-5 / SECEC)).